The sequence spans 360 residues: Phospho-N-acetylmuramoyl-pentapeptide-transferase (360 aa).

The next 10 membrane-spanning stretches (helical) occupy residues 25–45, 73–93, 97–117, 134–154, 168–188, 199–219, 236–256, 263–283, 288–308, and 338–358; these read RGILGVLTALSLALWLGPWMI, TMGGALILSAIAVSTLLWADL, YVWVVLIVTLAFGAIGWVDDY, YFWQSVFGLAAAVFLYKTAPT, VTIPLGVGFVVLTYFVIVGSS, GLAIMPTVMVGGALGIFCYLS, SGELIVFCGALIGAGLGFLWF, VFMGDVGALALGAALGTIAVI, IVLFIMGGIFVVETLSVVIQV, and VIVRFWIITVILVLIGLATLK.

The protein belongs to the glycosyltransferase 4 family. MraY subfamily. Mg(2+) serves as cofactor.

It localises to the cell inner membrane. It catalyses the reaction UDP-N-acetyl-alpha-D-muramoyl-L-alanyl-gamma-D-glutamyl-meso-2,6-diaminopimeloyl-D-alanyl-D-alanine + di-trans,octa-cis-undecaprenyl phosphate = di-trans,octa-cis-undecaprenyl diphospho-N-acetyl-alpha-D-muramoyl-L-alanyl-D-glutamyl-meso-2,6-diaminopimeloyl-D-alanyl-D-alanine + UMP. The protein operates within cell wall biogenesis; peptidoglycan biosynthesis. Catalyzes the initial step of the lipid cycle reactions in the biosynthesis of the cell wall peptidoglycan: transfers peptidoglycan precursor phospho-MurNAc-pentapeptide from UDP-MurNAc-pentapeptide onto the lipid carrier undecaprenyl phosphate, yielding undecaprenyl-pyrophosphoryl-MurNAc-pentapeptide, known as lipid I. In Pseudomonas putida (strain ATCC 700007 / DSM 6899 / JCM 31910 / BCRC 17059 / LMG 24140 / F1), this protein is Phospho-N-acetylmuramoyl-pentapeptide-transferase.